A 1062-amino-acid chain; its full sequence is Protein P1-P2 (1062 aa).

Residues 1-20 form the signal peptide; sequence MNRFTAYAALFFMFSLCSTA. The next 3 helical transmembrane spans lie at 121–141, 144–164, and 172–192; these read AASV…WTLA, ITLF…LGCI, and ALSL…KIIW. The 193-residue stretch at 207 to 399 folds into the Peptidase S39 domain; that stretch reads VEGYKGFSVP…GITSPNYVFE (193 aa). Active-site for protease activity residues include H255, D286, and S354. The tract at residues 455–560 is disordered; sequence ATNAPAEKTA…QTKEARKAWR (106 aa). Polar residues predominate over residues 463 to 484; sequence TAQTNSAEKTAPSTSAEKTALT. Basic residues predominate over residues 497–511; the sequence is QNKRQLRHPRRRYKR. Over residues 551–560 the composition is skewed to basic and acidic residues; the sequence is QTKEARKAWR. The 116-residue stretch at 859 to 974 folds into the RdRp catalytic domain; that stretch reads EYTRPTDCSG…APNSDLEEYK (116 aa).

In terms of processing, specific enzymatic cleavages in vivo yield mature proteins. The protease probably cleaves itself and releases the RdRp (Potential). Cleavages have been shown in the P1 protein, but since the N-terminus containing the serine protease is shared between P1 and P1-P2, cleavages should also occur within the P1-P2 protein.

Its subcellular location is the membrane. It catalyses the reaction RNA(n) + a ribonucleoside 5'-triphosphate = RNA(n+1) + diphosphate. In terms of biological role, precursor from which the RNA-dependent RNA polymerase (RdRp) is probably released. RNA-dependent RNA polymerase plays an essential role in virus replication (Potential). In Potato leafroll virus (strain Potato/Scotland/strain 1/1984) (PLrV), this protein is Protein P1-P2.